The primary structure comprises 215 residues: Small ribosomal subunit protein uS3 (215 aa).

The 70-residue stretch at 38–107 (IRDYIKKTYH…KFQLNIEEVK (70 aa)) folds into the KH type-2 domain.

Belongs to the universal ribosomal protein uS3 family. In terms of assembly, part of the 30S ribosomal subunit. Forms a tight complex with proteins S10 and S14.

Binds the lower part of the 30S subunit head. Binds mRNA in the 70S ribosome, positioning it for translation. The protein is Small ribosomal subunit protein uS3 of Kosmotoga olearia (strain ATCC BAA-1733 / DSM 21960 / TBF 19.5.1).